Consider the following 220-residue polypeptide: Ribose-5-phosphate isomerase A (220 aa).

Residues 28–31 (TGST), 81–84 (DGAD), and 94–97 (KGGG) contribute to the substrate site. Glu103 (proton acceptor) is an active-site residue. Substrate is bound at residue Lys121.

Belongs to the ribose 5-phosphate isomerase family. As to quaternary structure, homodimer.

The enzyme catalyses aldehydo-D-ribose 5-phosphate = D-ribulose 5-phosphate. Its pathway is carbohydrate degradation; pentose phosphate pathway; D-ribose 5-phosphate from D-ribulose 5-phosphate (non-oxidative stage): step 1/1. Catalyzes the reversible conversion of ribose-5-phosphate to ribulose 5-phosphate. The sequence is that of Ribose-5-phosphate isomerase A from Yersinia enterocolitica serotype O:8 / biotype 1B (strain NCTC 13174 / 8081).